The primary structure comprises 90 residues: UPF0367 protein PMT9312_0127 (90 aa).

This sequence belongs to the UPF0367 family.

The protein is UPF0367 protein PMT9312_0127 of Prochlorococcus marinus (strain MIT 9312).